Consider the following 765-residue polypeptide: Ankyrin repeat and protein kinase domain-containing protein 1 (765 aa).

Residues E22–L289 enclose the Protein kinase domain. Residues V28 to V36 and K51 contribute to the ATP site. The active-site Proton acceptor is D145. ANK repeat units follow at residues N361–C390, S394–R423, D427–A456, E460–L489, E493–A522, N526–A555, S559–L588, Q592–A621, V625–A654, S658–A687, V691–V720, and V724–T753.

This sequence belongs to the protein kinase superfamily. TKL Ser/Thr protein kinase family. In terms of tissue distribution, highly expressed in brain and weakly expressed in placenta and spinal cord.

It catalyses the reaction L-seryl-[protein] + ATP = O-phospho-L-seryl-[protein] + ADP + H(+). The enzyme catalyses L-threonyl-[protein] + ATP = O-phospho-L-threonyl-[protein] + ADP + H(+). In Homo sapiens (Human), this protein is Ankyrin repeat and protein kinase domain-containing protein 1 (ANKK1).